Consider the following 360-residue polypeptide: Peptide chain release factor 1 (360 aa).

N5-methylglutamine is present on Q235.

Belongs to the prokaryotic/mitochondrial release factor family. Methylated by PrmC. Methylation increases the termination efficiency of RF1.

It localises to the cytoplasm. Functionally, peptide chain release factor 1 directs the termination of translation in response to the peptide chain termination codons UAG and UAA. The chain is Peptide chain release factor 1 from Burkholderia pseudomallei (strain 1106a).